Consider the following 1041-residue polypeptide: Nuclear pore complex protein NUP98A (1041 aa).

Positions 1 to 34 are enriched in polar residues; the sequence is MFGSSNPFGQSSGTSPFGSQSLFGQTSNTSSNNP. Positions 1-44 are disordered; that stretch reads MFGSSNPFGQSSGTSPFGSQSLFGQTSNTSSNNPFAPATPFGTS. A run of 44 repeats spans residues 2–3, 8–9, 17–18, 23–24, 41–42, 56–57, 64–65, 79–80, 87–88, 94–95, 103–104, 109–110, 124–125, 135–136, 140–141, 146–147, 154–155, 162–163, 170–171, 178–179, 186–187, 194–195, 202–203, 210–211, 217–218, 222–223, 228–229, 236–237, 244–245, 252–253, 260–261, 268–269, 276–277, 284–285, 294–295, 300–301, 307–308, 312–313, 319–320, 329–330, 334–335, 339–340, 411–412, and 427–428. The interval 2-677 is 65 X 2 AA repeats of F-G; it reads FGSSNPFGQS…QPVAVTNPFG (676 aa). Residues 98 to 171 form a disordered region; the sequence is PASSPFGGSS…FGATSTPSFG (74 aa). Residues 117 to 171 show a composition bias toward polar residues; it reads STPQSNPFGNSTQQSQPAFGNTSFGSSTPFGATNTPAFGAPSTPSFGATSTPSFG. Disordered regions lie at residues 315 to 347 and 392 to 447; these read TPSP…GGSR and QRGD…TNPF. The span at 430-447 shows a compositional bias: low complexity; sequence TSANPTNPFSSSTSTNPF. 21 consecutive repeat copies span residues 459-460, 466-467, 471-472, 480-481, 491-492, 497-498, 506-507, 514-515, 521-522, 533-534, 555-556, 562-563, 565-566, 573-574, 586-587, 604-605, 627-628, 632-633, 650-651, 655-656, and 676-677. Residues 517 to 526 show a composition bias toward low complexity; it reads SSSIFGSAPG. The tract at residues 517 to 560 is disordered; that stretch reads SSSIFGSAPGQGATPAFGNSQPSTLFNSTPSTGQTGSAFGQTGS. Residues 533–560 show a composition bias toward polar residues; the sequence is FGNSQPSTLFNSTPSTGQTGSAFGQTGS. The disordered stretch occupies residues 734–860; it reads KYRPGENGPK…KERPYKTLSG (127 aa). The span at 782-793 shows a compositional bias: basic and acidic residues; the sequence is SRDKSILPKEQR. Positions 831 to 846 are enriched in polar residues; the sequence is TSVNANQKPNGTTRSD. One can recognise a Peptidase S59 domain in the interval 885 to 1027; the sequence is QSDYFTEPRI…GEWKFRVEHF (143 aa).

It belongs to the nucleoporin GLFG family. Part of the nuclear pore complex (NPC). The NPC has an eight-fold symmetrical structure comprising a central transport channel and two rings, the cytoplasmic and nuclear rings, to which eight filaments are attached. The cytoplasmic filaments have loose ends, while the nuclear filaments are joined in a distal ring, forming a nuclear basket. NPCs are highly dynamic in configuration and composition, and can be devided in 3 subcomplexes, the NUP62 subcomplex, the NUP107-160 subcomplex and the NUP93 subcomplex, containing approximately 30 different nucleoporin proteins.

Its subcellular location is the nucleus. The protein resides in the nuclear pore complex. The chain is Nuclear pore complex protein NUP98A from Arabidopsis thaliana (Mouse-ear cress).